A 220-amino-acid polypeptide reads, in one-letter code: Deoxyribose-phosphate aldolase (220 aa).

Catalysis depends on Asp-89, which acts as the Proton donor/acceptor. The Schiff-base intermediate with acetaldehyde role is filled by Lys-151. Catalysis depends on Lys-180, which acts as the Proton donor/acceptor.

The protein belongs to the DeoC/FbaB aldolase family. DeoC type 1 subfamily.

It localises to the cytoplasm. It catalyses the reaction 2-deoxy-D-ribose 5-phosphate = D-glyceraldehyde 3-phosphate + acetaldehyde. It functions in the pathway carbohydrate degradation; 2-deoxy-D-ribose 1-phosphate degradation; D-glyceraldehyde 3-phosphate and acetaldehyde from 2-deoxy-alpha-D-ribose 1-phosphate: step 2/2. In terms of biological role, catalyzes a reversible aldol reaction between acetaldehyde and D-glyceraldehyde 3-phosphate to generate 2-deoxy-D-ribose 5-phosphate. The polypeptide is Deoxyribose-phosphate aldolase (Bdellovibrio bacteriovorus (strain ATCC 15356 / DSM 50701 / NCIMB 9529 / HD100)).